The primary structure comprises 188 residues: Elongation factor P (188 aa).

This sequence belongs to the elongation factor P family.

It localises to the cytoplasm. It functions in the pathway protein biosynthesis; polypeptide chain elongation. Functionally, involved in peptide bond synthesis. Stimulates efficient translation and peptide-bond synthesis on native or reconstituted 70S ribosomes in vitro. Probably functions indirectly by altering the affinity of the ribosome for aminoacyl-tRNA, thus increasing their reactivity as acceptors for peptidyl transferase. This is Elongation factor P from Anaplasma marginale (strain Florida).